A 198-amino-acid chain; its full sequence is Snake venom metalloproteinase BpirMP (198 aa).

The Peptidase M12B domain maps to threonine 1–proline 197. Ca(2+) is bound by residues glutamate 4 and aspartate 88. 3 disulfide bridges follow: cysteine 112/cysteine 192, cysteine 152/cysteine 176, and cysteine 154/cysteine 159. A Zn(2+)-binding site is contributed by histidine 137. Glutamate 138 is an active-site residue. Histidine 141 and histidine 147 together coordinate Zn(2+). Ca(2+)-binding residues include cysteine 192 and asparagine 195.

Belongs to the venom metalloproteinase (M12B) family. P-I subfamily. As to quaternary structure, monomer. Zn(2+) serves as cofactor. In terms of tissue distribution, expressed by the venom gland.

The protein resides in the secreted. Its activity is regulated as follows. Inhibited by the chelating agents EDTA, EGTA and 1,10-phenanthroline. Is not inhibited by serine proteinase inhibitors aprotinin, leupeptin and benzamidine. Its function is as follows. Zinc metalloprotease that preferentially degrades Aalpha chain of fibrinogen (FGA) (at a dose of 5 ug, whereas at a dose of 10 ug, both FGA and FGB are completely degraded). Degrades fibrin gel in a dose-dependent manner, as well blood clots formed in vitro (thrombolytic activity). Induces hemorrhage (in the dorsal skin of mice), with an MHD of 50 ug. The basal membrane components collagen (all chains of type IV) (COL4A4), fibronectin (FN1), laminin and nidogen are all degraded by this toxin. This Bothrops pirajai (Piraja's lancehead) protein is Snake venom metalloproteinase BpirMP.